The chain runs to 91 residues: Elongation factor 1-beta (91 aa).

The protein belongs to the EF-1-beta/EF-1-delta family.

Functionally, promotes the exchange of GDP for GTP in EF-1-alpha/GDP, thus allowing the regeneration of EF-1-alpha/GTP that could then be used to form the ternary complex EF-1-alpha/GTP/AAtRNA. The sequence is that of Elongation factor 1-beta (ef1b) from Pyrococcus horikoshii (strain ATCC 700860 / DSM 12428 / JCM 9974 / NBRC 100139 / OT-3).